The sequence spans 111 residues: Irditoxin subunit B (111 aa).

Residues 1–19 (MKTLLLAVAVVAFVCLGSA) form the signal peptide. A propeptide spanning residues 20 to 34 (DQLGLGRQQIDWGKG) is cleaved from the precursor. Q35 carries the post-translational modification Pyrrolidone carboxylic acid. 5 disulfide bridges follow: C44/C68, C47/C55, C61/C87, C91/C102, and C103/C108.

The protein belongs to the three-finger toxin family. Ancestral subfamily. Boigatoxin sub-subfamily. In terms of assembly, heterodimer of A and B chains; disulfide-linked. In terms of tissue distribution, expressed by the venom gland.

Its subcellular location is the secreted. In terms of biological role, this bird and reptile-specific postsynaptic neurotoxin inhibits the chick muscle alpha-1-beta-1-gamma-delta (CHRNA1-CHRNB1-CHRNG-CHRND) nicotinic acetylcholine receptor (nAChR) 100-fold more compared with the mouse receptor. In vivo, produces rapid flaccid paralysis, dyspnea and increased respiratory rate in geckos. At sublethal doses geckos were immobilized for up to three days and then recovered. Chicks injected with lethal doses showed rapid onset of inactivity, dyspnea and neck droop, and no extended paralysis with survival was seen. This chain is Irditoxin subunit B, found in Boiga irregularis (Brown tree snake).